Consider the following 485-residue polypeptide: Zinc finger protein 639 (485 aa).

Residues 1–14 (MNEYPKKRKRKTLH) are compositionally biased toward basic residues. Residues 1-20 (MNEYPKKRKRKTLHPSRYSD) form a disordered region. Phosphoserine is present on Ser60. Residue Lys76 forms a Glycyl lysine isopeptide (Lys-Gly) (interchain with G-Cter in SUMO2) linkage. At Ser88 the chain carries Phosphoserine. Glycyl lysine isopeptide (Lys-Gly) (interchain with G-Cter in SUMO2) cross-links involve residues Lys177, Lys181, and Lys226. 8 consecutive C2H2-type zinc fingers follow at residues 204-227 (YKCELCEFNSKYFSDLKQHMILKH), 233-255 (NVCRVCKESFSTNMLLIEHAKLH), 260-283 (YICKYCDYKTVIFENLSQHIADTH), 289-311 (YWCEQCDVQFSSSSELYLHFQEH), 374-397 (FVCQVCGFRSRLHTNVNRHVAIEH), 403-425 (HVCDDCGKGFSSMLEYCKHLNSH), 431-454 (YLCQYCEYSTGQIEDLKIHLDFKH), and 460-482 (HKCSDCLMRFGNERELISHLPVH). The interval 371 to 455 (KNFFVCQVCG…LKIHLDFKHS (85 aa)) is interaction with CTNNA2.

The protein belongs to the krueppel C2H2-type zinc-finger protein family. Interacts with CTNNA2.

Its subcellular location is the nucleus. In terms of biological role, binds DNA and may function as a transcriptional repressor. The protein is Zinc finger protein 639 (ZNF639) of Bos taurus (Bovine).